Here is a 364-residue protein sequence, read N- to C-terminus: Aminomethyltransferase (364 aa).

It belongs to the GcvT family. In terms of assembly, the glycine cleavage system is composed of four proteins: P, T, L and H.

It carries out the reaction N(6)-[(R)-S(8)-aminomethyldihydrolipoyl]-L-lysyl-[protein] + (6S)-5,6,7,8-tetrahydrofolate = N(6)-[(R)-dihydrolipoyl]-L-lysyl-[protein] + (6R)-5,10-methylene-5,6,7,8-tetrahydrofolate + NH4(+). Functionally, the glycine cleavage system catalyzes the degradation of glycine. This is Aminomethyltransferase from Escherichia coli O6:H1 (strain CFT073 / ATCC 700928 / UPEC).